The chain runs to 105 residues: Heat shock protein HspQ (105 aa).

This sequence belongs to the HspQ family.

The protein resides in the cytoplasm. Its function is as follows. Involved in the degradation of certain denaturated proteins, including DnaA, during heat shock stress. In Blochmanniella floridana, this protein is Heat shock protein HspQ.